The primary structure comprises 761 residues: Isocyanide synthase xanB (761 aa).

Positions 24–128 (LLGSYETKAP…GKGTKADPSH (105 aa)) are disordered. The segment covering 36–48 (ETSEIAASSSSSE) has biased composition (low complexity). The segment covering 93–102 (TVSTPQSSDN) has biased composition (polar residues). Basic and acidic residues predominate over residues 115 to 126 (FKDEGKGTKADP).

Belongs to the isocyanide synthase family.

It functions in the pathway secondary metabolite biosynthesis. Functionally, isocyanide synthase; part of the gene cluster that mediates the biosynthesis of the isocyanide xanthocillin and its derivatives. The first step of the pathway consists in the conversion of tyrosine into a vinyl-isonitrile intermediate by the isocyanide synthase xanB. Subsequent oxidative dimerization of this intermediate to form xanthocillin may involve the cytochrome P450 monooxygenase xanG, whose expression is coregulated with that of XanB. Xanthocillin can be further modified by the isonitrile hydratase-like protein xanA which introduces N-formyl groups and the methyltransferase xanE which introduces methyl groups, leading to the production of several derivatives including fumiformamide. Finally, fumiformamide can be subject to both oxidative and reductive cyclization to yield melanocins E and F, respectively. This chain is Isocyanide synthase xanB, found in Aspergillus fumigatus (strain ATCC MYA-4609 / CBS 101355 / FGSC A1100 / Af293) (Neosartorya fumigata).